A 104-amino-acid polypeptide reads, in one-letter code: Large ribosomal subunit protein uL24 (104 aa).

It belongs to the universal ribosomal protein uL24 family. As to quaternary structure, part of the 50S ribosomal subunit.

Its function is as follows. One of two assembly initiator proteins, it binds directly to the 5'-end of the 23S rRNA, where it nucleates assembly of the 50S subunit. In terms of biological role, one of the proteins that surrounds the polypeptide exit tunnel on the outside of the subunit. The sequence is that of Large ribosomal subunit protein uL24 from Methylobacterium radiotolerans (strain ATCC 27329 / DSM 1819 / JCM 2831 / NBRC 15690 / NCIMB 10815 / 0-1).